Here is a 286-residue protein sequence, read N- to C-terminus: Centromere protein P (286 aa).

Residues 1–73 (MDSETRELRA…RSEHSFLSKL (73 aa)) adopt a coiled-coil conformation. Residue Ser38 is modified to Phosphoserine.

This sequence belongs to the CENP-P/CTF19 family. As to quaternary structure, component of the CENPA-CAD complex, composed of CENPI, CENPK, CENPL, CENPO, CENPP, CENPQ, CENPR and CENPS. The CENPA-CAD complex interacts with the CENPA-NAC complex, at least composed of CENPA, CENPC, CENPH, CENPM, CENPN, CENPT and CENPU.

It localises to the nucleus. Its subcellular location is the chromosome. The protein localises to the centromere. Its function is as follows. Component of the CENPA-CAD (nucleosome distal) complex, a complex recruited to centromeres which is involved in assembly of kinetochore proteins, mitotic progression and chromosome segregation. May be involved in incorporation of newly synthesized CENPA into centromeres via its interaction with the CENPA-NAC complex. The chain is Centromere protein P (Cenpp) from Mus musculus (Mouse).